The primary structure comprises 38 residues: Photosystem II reaction center protein L (38 aa).

A helical transmembrane segment spans residues 17–37 (SLYWGLLLIFVLAVLFSSYIF).

Belongs to the PsbL family. PSII is composed of 1 copy each of membrane proteins PsbA, PsbB, PsbC, PsbD, PsbE, PsbF, PsbH, PsbI, PsbJ, PsbK, PsbL, PsbM, PsbT, PsbX, PsbY, PsbZ, Psb30/Ycf12, at least 3 peripheral proteins of the oxygen-evolving complex and a large number of cofactors. It forms dimeric complexes.

It is found in the plastid. The protein localises to the chloroplast thylakoid membrane. Its function is as follows. One of the components of the core complex of photosystem II (PSII). PSII is a light-driven water:plastoquinone oxidoreductase that uses light energy to abstract electrons from H(2)O, generating O(2) and a proton gradient subsequently used for ATP formation. It consists of a core antenna complex that captures photons, and an electron transfer chain that converts photonic excitation into a charge separation. This subunit is found at the monomer-monomer interface and is required for correct PSII assembly and/or dimerization. This Tetradesmus obliquus (Green alga) protein is Photosystem II reaction center protein L.